Consider the following 88-residue polypeptide: Small ribosomal subunit protein bS20 (88 aa).

Residues 1 to 25 are disordered; that stretch reads MANTPSAKKAARKIERRTAVNRARR.

This sequence belongs to the bacterial ribosomal protein bS20 family.

Binds directly to 16S ribosomal RNA. This chain is Small ribosomal subunit protein bS20, found in Azorhizobium caulinodans (strain ATCC 43989 / DSM 5975 / JCM 20966 / LMG 6465 / NBRC 14845 / NCIMB 13405 / ORS 571).